The primary structure comprises 73 residues: UPF0154 protein MG335.1 (73 aa).

A helical membrane pass occupies residues 6-26 (LALGLGIPLSLLVGMILGYFI).

It belongs to the UPF0154 family.

Its subcellular location is the membrane. This chain is UPF0154 protein MG335.1, found in Mycoplasma genitalium (strain ATCC 33530 / DSM 19775 / NCTC 10195 / G37) (Mycoplasmoides genitalium).